Reading from the N-terminus, the 377-residue chain is Succinyl-diaminopimelate desuccinylase (377 aa).

Zn(2+) is bound at residue histidine 66. Residue aspartate 68 is part of the active site. Aspartate 99 provides a ligand contact to Zn(2+). Catalysis depends on glutamate 133, which acts as the Proton acceptor. The Zn(2+) site is built by glutamate 134, glutamate 162, and histidine 348.

Belongs to the peptidase M20A family. DapE subfamily. Homodimer. Zn(2+) serves as cofactor. The cofactor is Co(2+).

The catalysed reaction is N-succinyl-(2S,6S)-2,6-diaminopimelate + H2O = (2S,6S)-2,6-diaminopimelate + succinate. It participates in amino-acid biosynthesis; L-lysine biosynthesis via DAP pathway; LL-2,6-diaminopimelate from (S)-tetrahydrodipicolinate (succinylase route): step 3/3. Catalyzes the hydrolysis of N-succinyl-L,L-diaminopimelic acid (SDAP), forming succinate and LL-2,6-diaminopimelate (DAP), an intermediate involved in the bacterial biosynthesis of lysine and meso-diaminopimelic acid, an essential component of bacterial cell walls. In Alcanivorax borkumensis (strain ATCC 700651 / DSM 11573 / NCIMB 13689 / SK2), this protein is Succinyl-diaminopimelate desuccinylase.